Here is a 293-residue protein sequence, read N- to C-terminus: Glutamine sensor pib2 (293 aa).

Positions 38–75 are disordered; sequence APTRQATNGTGSVSGSPNSSSNSTPANQGSLPSHTNPQ. The segment covering 44–62 has biased composition (low complexity); that stretch reads TNGTGSVSGSPNSSSNSTP. Over residues 63–75 the composition is skewed to polar residues; it reads ANQGSLPSHTNPQ. Residues 156 to 220 form an FYVE-type; degenerate zinc finger; sequence DVSVCSFPSC…SCVSCFYEYL (65 aa). Residues Cys-178, Cys-181, Cys-212, and Cys-215 each coordinate Zn(2+). The span at 242-256 shows a compositional bias: polar residues; that stretch reads APQQATTHPPSQPKN. The interval 242 to 276 is disordered; that stretch reads APQQATTHPPSQPKNAVSVPIPKMDSTDSKGELPS. Residue Ser-259 is modified to Phosphoserine.

As to quaternary structure, interacts with the TORC1 complex when activated by glutamine or cysteine.

The protein localises to the vacuole membrane. Its activity is regulated as follows. Activated by glutamine. Functionally, functions as an intracellular glutamine sensor that directly activates the TORC1 signaling pathway, to promote cell growth when glutamine is available. This Schizosaccharomyces pombe (strain 972 / ATCC 24843) (Fission yeast) protein is Glutamine sensor pib2.